A 325-amino-acid chain; its full sequence is Tetraacyldisaccharide 4'-kinase (325 aa).

55 to 62 serves as a coordination point for ATP; the sequence is TAGGNGKT.

This sequence belongs to the LpxK family.

The enzyme catalyses a lipid A disaccharide + ATP = a lipid IVA + ADP + H(+). Its pathway is glycolipid biosynthesis; lipid IV(A) biosynthesis; lipid IV(A) from (3R)-3-hydroxytetradecanoyl-[acyl-carrier-protein] and UDP-N-acetyl-alpha-D-glucosamine: step 6/6. Transfers the gamma-phosphate of ATP to the 4'-position of a tetraacyldisaccharide 1-phosphate intermediate (termed DS-1-P) to form tetraacyldisaccharide 1,4'-bis-phosphate (lipid IVA). The protein is Tetraacyldisaccharide 4'-kinase of Salmonella dublin (strain CT_02021853).